A 359-amino-acid chain; its full sequence is Alanine racemase, biosynthetic (359 aa).

Residue Lys-34 is the Proton acceptor; specific for D-alanine of the active site. Lys-34 bears the N6-(pyridoxal phosphate)lysine mark. Residue Arg-129 coordinates substrate. Tyr-255 (proton acceptor; specific for L-alanine) is an active-site residue. Met-303 is a binding site for substrate.

This sequence belongs to the alanine racemase family. As to quaternary structure, monomer but homodimer in the presence of the substrate. Pyridoxal 5'-phosphate serves as cofactor.

It carries out the reaction L-alanine = D-alanine. It functions in the pathway amino-acid biosynthesis; D-alanine biosynthesis; D-alanine from L-alanine: step 1/1. It participates in cell wall biogenesis; peptidoglycan biosynthesis. Its function is as follows. Catalyzes the interconversion of L-alanine and D-alanine. The sequence is that of Alanine racemase, biosynthetic (alr) from Shigella sonnei.